The primary structure comprises 323 residues: Beta-ketoacyl-[acyl-carrier-protein] synthase III (323 aa).

Residues cysteine 114 and histidine 250 contribute to the active site. An ACP-binding region spans residues 251-255 (QANIR). The active site involves asparagine 280.

It belongs to the thiolase-like superfamily. FabH family. In terms of assembly, homodimer.

Its subcellular location is the cytoplasm. It catalyses the reaction malonyl-[ACP] + acetyl-CoA + H(+) = 3-oxobutanoyl-[ACP] + CO2 + CoA. It participates in lipid metabolism; fatty acid biosynthesis. In terms of biological role, catalyzes the condensation reaction of fatty acid synthesis by the addition to an acyl acceptor of two carbons from malonyl-ACP. Catalyzes the first condensation reaction which initiates fatty acid synthesis and may therefore play a role in governing the total rate of fatty acid production. Possesses both acetoacetyl-ACP synthase and acetyl transacylase activities. Its substrate specificity determines the biosynthesis of branched-chain and/or straight-chain of fatty acids. The protein is Beta-ketoacyl-[acyl-carrier-protein] synthase III of Roseobacter denitrificans (strain ATCC 33942 / OCh 114) (Erythrobacter sp. (strain OCh 114)).